The primary structure comprises 652 residues: ATP-binding cassette sub-family G member 5 (652 aa).

The disordered stretch occupies residues 1–30; sequence MSELPFLSPEGARGPHNNRGSQSSLEEGSV. The Cytoplasmic segment spans residues 1 to 384; the sequence is MSELPFLSPE…RVTRNLMRNK (384 aa). Positions 18–30 are enriched in polar residues; the sequence is NRGSQSSLEEGSV. The region spanning 39–294 is the ABC transporter domain; that stretch reads LGVLNVSFSV…FNNCGYPCPE (256 aa). 87-94 contacts ATP; the sequence is GSSGSGKT. A helical membrane pass occupies residues 385-405; it reads QVVIMRLVQNLIMGLFLIFYL. The region spanning 389–646 is the ABC transmembrane type-2 domain; that stretch reads MRLVQNLIMG…ILGMVVFKVR (258 aa). Over 406–422 the chain is Extracellular; it reads LRVQNNMLKGAVQDRVG. Residues 423–443 form a helical membrane-spanning segment; it reads LLYQLVGATPYTGMLNAVNLF. The Cytoplasmic portion of the chain corresponds to 444–468; it reads PMLRAVSDQESQDGLYQKWQMLLAY. Residues 469–490 form a helical membrane-spanning segment; that stretch reads VLHALPFSIVATVIFSSVCYWT. The Extracellular segment spans residues 491–501; it reads LGLYPEVARFG. A helical membrane pass occupies residues 502–522; sequence YFSAALLAPHLIGEFLTLVLL. The Cytoplasmic portion of the chain corresponds to 523–529; that stretch reads GMVQNPN. A helical membrane pass occupies residues 530–550; sequence IVNSIVALLSISGLLIGSGFI. Topologically, residues 551–624 are extracellular; that stretch reads RNIEEMPIPL…PGATSRFTTN (74 aa). Residues N585 and N592 are each glycosylated (N-linked (GlcNAc...) asparagine). The helical transmembrane segment at 625-645 threads the bilayer; sequence FLILYSFIPTLVILGMVVFKV. Topologically, residues 646–652 are cytoplasmic; sequence RDYLISR.

The protein belongs to the ABC transporter superfamily. ABCG family. Eye pigment precursor importer (TC 3.A.1.204) subfamily. Heterodimer with ABCG8. Requires Mg(2+) as cofactor. Post-translationally, N-glycosylated. N-glycosylation is important for efficient export out of the endoplasmic reticulum. In terms of tissue distribution, detected in liver (at protein level). Expressed only in liver and intestine.

The protein localises to the cell membrane. It is found in the apical cell membrane. The enzyme catalyses cholesterol(in) + ATP + H2O = cholesterol(out) + ADP + phosphate + H(+). It catalyses the reaction sitosterol(in) + ATP + H2O = sitosterol(out) + ADP + phosphate + H(+). Its function is as follows. ABCG5 and ABCG8 form an obligate heterodimer that mediates Mg(2+)- and ATP-dependent sterol transport across the cell membrane. Plays an essential role in the selective transport of dietary plant sterols and cholesterol in and out of the enterocytes and in the selective sterol excretion by the liver into bile. Required for normal sterol homeostasis. The heterodimer with ABCG8 has ATPase activity. The polypeptide is ATP-binding cassette sub-family G member 5 (Rattus norvegicus (Rat)).